Here is a 121-residue protein sequence, read N- to C-terminus: UPF0102 protein BHWA1_02005 (121 aa).

It belongs to the UPF0102 family.

In Brachyspira hyodysenteriae (strain ATCC 49526 / WA1), this protein is UPF0102 protein BHWA1_02005.